The chain runs to 503 residues: SusD-like protein P38 (503 aa).

An N-terminal signal peptide occupies residues 1–21; the sequence is MKKFKNISITFLILISLGVLN.

It belongs to the SusD family.

The protein resides in the cell outer membrane. Functionally, polysaccharide-binding protein probably involved in ulvan degradation. Ulvan is the main polysaccharide component of the Ulvales (green seaweed) cell wall. It is composed of disaccharide building blocks comprising 3-sulfated rhamnose (Rha3S) linked to D-glucuronic acid (GlcA), L-iduronic acid (IduA), or D-xylose (Xyl). The SusD-like protein may mediate ulvan oligomer-binding before transport in the periplasm for further degradation. The protein is SusD-like protein P38 of Formosa agariphila (strain DSM 15362 / KCTC 12365 / LMG 23005 / KMM 3901 / M-2Alg 35-1).